Here is a 435-residue protein sequence, read N- to C-terminus: Probable histidine--tRNA ligase, cytoplasmic (435 aa).

Belongs to the class-II aminoacyl-tRNA synthetase family.

Its subcellular location is the cytoplasm. It carries out the reaction tRNA(His) + L-histidine + ATP = L-histidyl-tRNA(His) + AMP + diphosphate + H(+). This Encephalitozoon cuniculi (strain GB-M1) (Microsporidian parasite) protein is Probable histidine--tRNA ligase, cytoplasmic.